The primary structure comprises 547 residues: Chaperonin GroEL (547 aa).

Residues 30–33 (TLGP), Lys-51, 87–91 (DGTTT), Gly-415, 479–481 (NAA), and Asp-495 contribute to the ATP site.

It belongs to the chaperonin (HSP60) family. Forms a cylinder of 14 subunits composed of two heptameric rings stacked back-to-back. Interacts with the co-chaperonin GroES.

It is found in the cytoplasm. It carries out the reaction ATP + H2O + a folded polypeptide = ADP + phosphate + an unfolded polypeptide.. Its function is as follows. Together with its co-chaperonin GroES, plays an essential role in assisting protein folding. The GroEL-GroES system forms a nano-cage that allows encapsulation of the non-native substrate proteins and provides a physical environment optimized to promote and accelerate protein folding. In Bordetella bronchiseptica (strain ATCC BAA-588 / NCTC 13252 / RB50) (Alcaligenes bronchisepticus), this protein is Chaperonin GroEL.